A 229-amino-acid chain; its full sequence is MTNEIRAIFDRIAPVYDQLNDWLSLGQHRIWKEMAIKWTGAKPGDTCLDLCCGSGDLALRLARRVGSTGQVYGVDFSANLLETAKQRAQAQYPQPHISWVEANVLDLPFEDNQFDAATMGYGLRNVTDIPRSLQELRRVLKPNAKAAILDFHRPNNQQFRTFQQWYLDSIVVPLADRLGVKEEYAYISPSLDRFPIGKEQVEIALQVGFTSATHYPIANGMMGVLIISK.

It belongs to the class I-like SAM-binding methyltransferase superfamily. MenG/UbiE family.

It catalyses the reaction demethylphylloquinol + S-adenosyl-L-methionine = phylloquinol + S-adenosyl-L-homocysteine + H(+). It functions in the pathway cofactor biosynthesis; phylloquinone biosynthesis. In terms of biological role, methyltransferase required for the conversion of 2-phytyl-1,4-beta-naphthoquinol to phylloquinol. The polypeptide is 2-phytyl-1,4-naphtoquinone methyltransferase (Trichormus variabilis (strain ATCC 29413 / PCC 7937) (Anabaena variabilis)).